Here is a 150-residue protein sequence, read N- to C-terminus: D-aminoacyl-tRNA deacylase (150 aa).

The Gly-cisPro motif, important for rejection of L-amino acids motif lies at 137-138 (GP).

This sequence belongs to the DTD family. In terms of assembly, homodimer.

It localises to the cytoplasm. It catalyses the reaction glycyl-tRNA(Ala) + H2O = tRNA(Ala) + glycine + H(+). The enzyme catalyses a D-aminoacyl-tRNA + H2O = a tRNA + a D-alpha-amino acid + H(+). An aminoacyl-tRNA editing enzyme that deacylates mischarged D-aminoacyl-tRNAs. Also deacylates mischarged glycyl-tRNA(Ala), protecting cells against glycine mischarging by AlaRS. Acts via tRNA-based rather than protein-based catalysis; rejects L-amino acids rather than detecting D-amino acids in the active site. By recycling D-aminoacyl-tRNA to D-amino acids and free tRNA molecules, this enzyme counteracts the toxicity associated with the formation of D-aminoacyl-tRNA entities in vivo and helps enforce protein L-homochirality. The polypeptide is D-aminoacyl-tRNA deacylase (Geotalea daltonii (strain DSM 22248 / JCM 15807 / FRC-32) (Geobacter daltonii)).